Reading from the N-terminus, the 313-residue chain is Olfactory receptor 1J2 (313 aa).

The Extracellular portion of the chain corresponds to 1–25 (MSPENQSSVSEFLLLGLPIRPEQQA). Asn5 is a glycosylation site (N-linked (GlcNAc...) asparagine). Residues 26–49 (VFFTLFLGMYLTTVLGNLLIMLLI) form a helical membrane-spanning segment. The Cytoplasmic segment spans residues 50-57 (QLDSHLHT). Residues 58 to 79 (PMYFFLSHLALTDISFSSVTVP) traverse the membrane as a helical segment. At 80–100 (KMLMDMRTKYKSILYEECISQ) the chain is on the extracellular side. The cysteines at positions 97 and 189 are disulfide-linked. Residues 101 to 120 (MYFFIFFTDLDSFLITSMAY) form a helical membrane-spanning segment. The Cytoplasmic portion of the chain corresponds to 121–139 (DRYVAICHPLHYTVIMREE). A helical membrane pass occupies residues 140 to 158 (LCVFLVAVSWILSCASSLS). Residues 159 to 196 (HTLLLTRLSFCAANTIPHVFCDLAALLKLSCSDIFLNE) lie on the Extracellular side of the membrane. The helical transmembrane segment at 197-219 (LVMFTVGVVVITLPFMCILVSYG) threads the bilayer. Topologically, residues 220–236 (YIGATILRVPSTKGIHK) are cytoplasmic. A helical membrane pass occupies residues 237 to 259 (ALSTCGSHLSVVSLYYGSIFGQY). The Extracellular portion of the chain corresponds to 260–272 (LFPTVSSSIDKDV). A helical membrane pass occupies residues 273–292 (IVALMYTVVTPMLNPFIYSL). At 293–313 (RNRDMKEALGKLFSRATFFSW) the chain is on the cytoplasmic side.

This sequence belongs to the G-protein coupled receptor 1 family.

Its subcellular location is the cell membrane. In terms of biological role, odorant receptor. In Homo sapiens (Human), this protein is Olfactory receptor 1J2 (OR1J2).